The following is a 501-amino-acid chain: Solute carrier family 2, facilitated glucose transporter member 5 (501 aa).

N-acetylmethionine is present on methionine 1. The Cytoplasmic segment spans residues 1 to 17; it reads MEEKHQEETGELTLVLA. The helical transmembrane segment at 18-38 threads the bilayer; that stretch reads LATLIAAFGSSFQYGYNVAAV. Residue tyrosine 31 coordinates D-fructose. Topologically, residues 39–67 are extracellular; it reads NSPSEFMQQFYNDTYYDRNEENIESFTLT. An N-linked (GlcNAc...) asparagine glycan is attached at asparagine 50. A helical membrane pass occupies residues 68 to 90; that stretch reads LLWSLTVSMFPFGGFIGSLMVGT. The Cytoplasmic portion of the chain corresponds to 91–97; sequence LVNKLGR. Residues 98-118 form a helical membrane-spanning segment; that stretch reads KGALLFNNIFSILPAILMGCS. Residues 119-125 lie on the Extracellular side of the membrane; sequence QIAQSFE. Residues 126-148 traverse the membrane as a helical segment; it reads LIIISRLLVGICAGISSNVVPMY. Topologically, residues 149-160 are cytoplasmic; the sequence is LGELAPKNLRGA. A helical membrane pass occupies residues 161-181; the sequence is LGVVPQLFITVGILVAQLFGL. Glutamine 166 is a binding site for D-fructose. Topologically, residues 182–191 are extracellular; sequence RSLLANEDGW. A helical membrane pass occupies residues 192–212; that stretch reads PVLLGLTGVPAGLQLLLLPFF. Topologically, residues 213 to 276 are cytoplasmic; that stretch reads PESPRYLLIQ…LFTMQSLRWQ (64 aa). Residues 277–297 form a helical membrane-spanning segment; sequence LISMIVLMAGQQLSGVNAIYY. D-fructose is bound by residues glutamine 287 and 295 to 297; that span reads IYY. At 298 to 312 the chain is on the extracellular side; it reads YADQIYLSAGVKSDD. A helical membrane pass occupies residues 313 to 333; sequence VQYVTAGTGAVNVFMTILTIF. Residues 334-341 are Cytoplasmic-facing; the sequence is VVELWGRR. A helical membrane pass occupies residues 342 to 362; that stretch reads FLLLVGFSTCLIACLVLTAAL. Residues 363-370 are Extracellular-facing; the sequence is ALQNTISW. A helical transmembrane segment spans residues 371–393; sequence MPYISIVCVIVYVIGHALGPSPI. Residue histidine 386 coordinates D-fructose. Residues 394–411 lie on the Cytoplasmic side of the membrane; the sequence is PALLITEIFLQSSRPAAY. A helical membrane pass occupies residues 412–432; sequence MIGGSVHWLSNFTVGLIFPFI. D-fructose is bound at residue 418–419; the sequence is HW. Residues 433-438 lie on the Extracellular side of the membrane; that stretch reads QMGLGP. The helical transmembrane segment at 439–459 threads the bilayer; the sequence is YSFIIFATICFLTTIYIFMVV. Residues 460 to 501 are Cytoplasmic-facing; the sequence is PETKGRTFIEINQIFTMKNKVSDVYPKKEEELGALPHAILEQ.

This sequence belongs to the major facilitator superfamily. Sugar transporter (TC 2.A.1.1) family. Glucose transporter subfamily. Detected at the apical membrane of villi in the jejunum. Detected in jejunum mucosa. Detected in epididymis and whole testis (at protein level). Detected in small intestine, kidney and testis. Detected in cochlea, but not in inner or outer cochlear hair cells.

It is found in the apical cell membrane. The protein localises to the cell membrane. It localises to the sarcolemma. The enzyme catalyses D-fructose(out) = D-fructose(in). With respect to regulation, fructose uptake is inhibited by cytochalasin B. Its function is as follows. Functions as a fructose transporter that has only low activity with other monosaccharides. Can mediate the uptake of deoxyglucose, but with low efficiency. Essential for fructose uptake in the small intestine. Plays a role in the regulation of salt uptake and blood pressure in response to dietary fructose. Required for the development of high blood pressure in response to high dietary fructose intake. The polypeptide is Solute carrier family 2, facilitated glucose transporter member 5 (Mus musculus (Mouse)).